A 551-amino-acid chain; its full sequence is DNA double-strand break repair helicase HerA (551 aa).

Residues Arg-152, 161–166 (GAGKSN), and 507–508 (RI) contribute to the ATP site.

The protein belongs to the HerA family. As to quaternary structure, homohexamer. Interacts with NurA.

The catalysed reaction is Couples ATP hydrolysis with the unwinding of duplex DNA at the replication fork by translocating in the 5'-3' direction. This creates two antiparallel DNA single strands (ssDNA). The leading ssDNA polymer is the template for DNA polymerase III holoenzyme which synthesizes a continuous strand.. The enzyme catalyses ATP + H2O = ADP + phosphate + H(+). It carries out the reaction Couples ATP hydrolysis with the unwinding of duplex DNA by translocating in the 3'-5' direction.. Its activity is regulated as follows. Helicase activity is stimulated in the presence of NurA. In terms of biological role, involved in DNA double-strand break (DSB) repair. Probably acts with NurA to stimulate resection of the 5' strand and produce the long 3' single-strand that is required for RadA loading. Has DNA-dependent ATPase activity and DNA helicase activity. The protein is DNA double-strand break repair helicase HerA of Pyrococcus furiosus (strain ATCC 43587 / DSM 3638 / JCM 8422 / Vc1).